Consider the following 257-residue polypeptide: NAD kinase (257 aa).

Asp46 functions as the Proton acceptor in the catalytic mechanism. NAD(+) is bound by residues 46–47 (DG), His51, 116–117 (NE), Asp146, Ala154, 157–162 (TAYNLS), and Gln218.

This sequence belongs to the NAD kinase family. Requires a divalent metal cation as cofactor.

It localises to the cytoplasm. It catalyses the reaction NAD(+) + ATP = ADP + NADP(+) + H(+). In terms of biological role, involved in the regulation of the intracellular balance of NAD and NADP, and is a key enzyme in the biosynthesis of NADP. Catalyzes specifically the phosphorylation on 2'-hydroxyl of the adenosine moiety of NAD to yield NADP. This is NAD kinase from Rhizobium meliloti (strain 1021) (Ensifer meliloti).